The chain runs to 361 residues: KDEL-tailed cysteine endopeptidase CEP2 (361 aa).

Residues 1 to 20 (MKKLLLIFLFSLVILQTACG) form the signal peptide. Positions 21–127 (FDYDDKEIES…FMYDHENLSK (107 aa)) are cleaved as a propeptide — activation peptide. Asn-75 and Asn-124 each carry an N-linked (GlcNAc...) asparagine glycan. 3 disulfide bridges follow: Cys-149/Cys-191, Cys-183/Cys-224, and Cys-282/Cys-333. Cys-152 is a catalytic residue. Active-site residues include His-288 and Asn-308. Positions 358-361 (KDEL) match the Prevents secretion from ER motif.

This sequence belongs to the peptidase C1 family. In terms of tissue distribution, expressed in roots, stems, rosette and cauline leaves, flowers, buds and green siliques. Found in the tip of young primary leaves, in very young root tips and at later stages in all tissues of lateral root, including the vascular bundle. Not expressed in lateral root primordia, while directly emerging through the epidermis.

It localises to the endoplasmic reticulum. Involved in the final stage of developmental programmed cell death and in intercalation of new cells. Cleaves extensins, thus probably supporting the final cell collapse. The chain is KDEL-tailed cysteine endopeptidase CEP2 from Arabidopsis thaliana (Mouse-ear cress).